The following is a 509-amino-acid chain: ATP synthase subunit alpha (509 aa).

169 to 176 (GDRQTGKT) contacts ATP.

The protein belongs to the ATPase alpha/beta chains family. F-type ATPases have 2 components, CF(1) - the catalytic core - and CF(0) - the membrane proton channel. CF(1) has five subunits: alpha(3), beta(3), gamma(1), delta(1), epsilon(1). CF(0) has three main subunits: a(1), b(2) and c(9-12). The alpha and beta chains form an alternating ring which encloses part of the gamma chain. CF(1) is attached to CF(0) by a central stalk formed by the gamma and epsilon chains, while a peripheral stalk is formed by the delta and b chains.

It localises to the cell inner membrane. The catalysed reaction is ATP + H2O + 4 H(+)(in) = ADP + phosphate + 5 H(+)(out). Its function is as follows. Produces ATP from ADP in the presence of a proton gradient across the membrane. The alpha chain is a regulatory subunit. The protein is ATP synthase subunit alpha of Chelativorans sp. (strain BNC1).